A 340-amino-acid polypeptide reads, in one-letter code: Ferredoxin--NADP reductase (340 aa).

FAD contacts are provided by aspartate 33, glutamine 41, tyrosine 46, alanine 86, phenylalanine 120, aspartate 286, and threonine 327.

Belongs to the ferredoxin--NADP reductase type 2 family. As to quaternary structure, homodimer. The cofactor is FAD.

It catalyses the reaction 2 reduced [2Fe-2S]-[ferredoxin] + NADP(+) + H(+) = 2 oxidized [2Fe-2S]-[ferredoxin] + NADPH. In Rickettsia rickettsii (strain Sheila Smith), this protein is Ferredoxin--NADP reductase.